Here is a 155-residue protein sequence, read N- to C-terminus: Archaemetzincin (155 aa).

A Zn(2+)-binding site is contributed by His-109. Glu-110 serves as the catalytic Proton acceptor. Zn(2+) contacts are provided by His-113, His-119, Cys-120, Cys-125, Cys-144, and Cys-147.

This sequence belongs to the peptidase M54 family. Monomer. The cofactor is Zn(2+).

Its function is as follows. Probable zinc metalloprotease whose natural substrate is unknown. The protein is Archaemetzincin of Pyrobaculum aerophilum (strain ATCC 51768 / DSM 7523 / JCM 9630 / CIP 104966 / NBRC 100827 / IM2).